Consider the following 276-residue polypeptide: MATTTAAAASGIFGIRIQDPRPGTGRVQARFGFSFGKKKPAPPPKKSRQVQDDGDRLVWFPGANPPEWLDGSMIGDRGFDPFGLGKPAEYLQYDFDGLDQNLAKNVAGDIIGIIQESSEIKPTPFQPYTEVFGIQRFRECELIHGRWAMLGTLGAIAVEALTGIAWQDAGKVELVEGSSYLGQPLPFSLTTLIWIEVLVVGYIEFQRNSELDPEKRIYPGGYFDPLGLAADPEKLDTLKLAEIKHSRLAMVAFLIFALQAAFTGKGPVSFLATFNN.

Residues 1–29 constitute a chloroplast transit peptide; the sequence is MATTTAAAASGIFGIRIQDPRPGTGRVQA. Residues 1–53 form a disordered region; the sequence is MATTTAAAASGIFGIRIQDPRPGTGRVQARFGFSFGKKKPAPPPKKSRQVQDD. Residues 36–48 show a composition bias toward basic residues; the sequence is GKKKPAPPPKKSR. Trp-59 contributes to the chlorophyll b binding site. The chlorophyll a site is built by Phe-79, Glu-141, and His-144. The helical transmembrane segment at 147–167 threads the bilayer; it reads WAMLGTLGAIAVEALTGIAWQ. Residue Leu-181 participates in chlorophyll a binding. Residues 185 to 205 form a helical membrane-spanning segment; it reads LPFSLTTLIWIEVLVVGYIEF. Residues Glu-204 and Arg-207 each contribute to the chlorophyll b site. Residues Glu-242, His-245, Arg-247, and Gln-259 each contribute to the chlorophyll a site. The helical transmembrane segment at 248–268 threads the bilayer; it reads LAMVAFLIFALQAAFTGKGPV.

The protein belongs to the light-harvesting chlorophyll a/b-binding (LHC) protein family. As to quaternary structure, the LHC complex consists of chlorophyll a-b binding proteins. Binds at least 14 chlorophylls (8 Chl-a and 6 Chl-b) and carotenoids such as lutein and neoxanthin. is required as a cofactor. In terms of processing, photoregulated by reversible phosphorylation of its threonine residues.

It is found in the plastid. The protein resides in the chloroplast thylakoid membrane. In terms of biological role, the light-harvesting complex (LHC) functions as a light receptor, it captures and delivers excitation energy to photosystems with which it is closely associated. The protein is Chlorophyll a-b binding protein CP29.3, chloroplastic (LHCB4.3) of Arabidopsis thaliana (Mouse-ear cress).